The chain runs to 278 residues: Tropomyosin A (278 aa).

The stretch at isoleucine 1–threonine 270 forms a coiled coil. Residues aspartate 92–arginine 134 are disordered. Residues glutamine 95–serine 104 show a composition bias toward polar residues. Positions threonine 105–arginine 134 are enriched in basic and acidic residues.

Belongs to the tropomyosin family. As to quaternary structure, homodimer.

In terms of biological role, tropomyosin, in association with the troponin complex, plays a central role in the calcium dependent regulation of muscle contraction. The protein is Tropomyosin A of Echinococcus granulosus (Hydatid tapeworm).